A 245-amino-acid chain; its full sequence is 1-(5-phosphoribosyl)-5-[(5-phosphoribosylamino)methylideneamino] imidazole-4-carboxamide isomerase (245 aa).

Asp-12 functions as the Proton acceptor in the catalytic mechanism. The Proton donor role is filled by Asp-131.

This sequence belongs to the HisA/HisF family.

The protein localises to the cytoplasm. It carries out the reaction 1-(5-phospho-beta-D-ribosyl)-5-[(5-phospho-beta-D-ribosylamino)methylideneamino]imidazole-4-carboxamide = 5-[(5-phospho-1-deoxy-D-ribulos-1-ylimino)methylamino]-1-(5-phospho-beta-D-ribosyl)imidazole-4-carboxamide. It participates in amino-acid biosynthesis; L-histidine biosynthesis; L-histidine from 5-phospho-alpha-D-ribose 1-diphosphate: step 4/9. The protein is 1-(5-phosphoribosyl)-5-[(5-phosphoribosylamino)methylideneamino] imidazole-4-carboxamide isomerase of Thermobifida fusca (strain YX).